The primary structure comprises 189 residues: MYKEPLGVKVDFESGVIEGAKKLVRRLSDMKGYFLDEETWRELVEREDPVVYEVYAVEQEEKEGDLNFATTVLYPGKVGKEFFFTKGHFHAKRDRAEVYIALKGKGGMLLQTPEGEARWIPMEPGTVVYVPPYWAHRTVNTGDEPFIFLAIYPADAGHDYGTIAEKGFSKIVIEENGEVKVVDNPRWKN.

Residues H88, H90, E97, and H136 each coordinate Fe cation.

This sequence belongs to the archaeal-type GPI family. Homodimer. Fe cation serves as cofactor.

It localises to the cytoplasm. It carries out the reaction alpha-D-glucose 6-phosphate = beta-D-fructose 6-phosphate. It functions in the pathway carbohydrate degradation; glycolysis; D-glyceraldehyde 3-phosphate and glycerone phosphate from D-glucose: step 2/4. This Pyrococcus horikoshii (strain ATCC 700860 / DSM 12428 / JCM 9974 / NBRC 100139 / OT-3) protein is Glucose-6-phosphate isomerase (pgiA).